A 260-amino-acid chain; its full sequence is Kallikrein-8 (260 aa).

The signal sequence occupies residues 1–28; it reads MGRPPPCAIQTWILLFLLMGAWAGLTRA. Residues 29 to 32 constitute a propeptide that is removed on maturation; sequence QGSK. Residues 33 to 257 enclose the Peptidase S1 domain; it reads ILEGQECKPH…YTNWIKKTMG (225 aa). 6 disulfides stabilise this stretch: Cys39–Cys173, Cys58–Cys74, Cys145–Cys246, Cys152–Cys218, Cys184–Cys198, and Cys208–Cys233. His73 (charge relay system) is an active-site residue. Asn110 carries N-linked (GlcNAc...) asparagine glycosylation. Catalysis depends on Asp120, which acts as the Charge relay system. Catalysis depends on Ser212, which acts as the Charge relay system.

Belongs to the peptidase S1 family. Kallikrein subfamily. Interacts with SPINK9. As to expression, restricted to hippocampus.

The protein localises to the secreted. It is found in the cytoplasm. The enzyme catalyses Cleavage of amide substrates following the basic amino acids Arg or Lys at the P1 position, with a preference for Arg over Lys.. In terms of biological role, serine protease which is capable of degrading a number of proteins such as casein, fibrinogen, kininogen, fibronectin and collagen type IV. Also cleaves L1CAM in response to increased neural activity. Induces neurite outgrowth and fasciculation of cultured hippocampal neurons. Plays a role in the formation and maturation of orphan and small synaptic boutons in the Schaffer-collateral pathway, regulates Schaffer-collateral long-term potentiation in the hippocampus and is required for memory acquisition and synaptic plasticity. Involved in skin desquamation and keratinocyte proliferation. Plays a role in the secondary phase of pathogenesis following spinal cord injury. This is Kallikrein-8 (Klk8) from Rattus norvegicus (Rat).